A 2531-amino-acid chain; its full sequence is Serine/threonine-protein kinase ATR (2531 aa).

Residues Leu1490–Gln2067 form the FAT domain. A PI3K/PI4K catalytic domain is found at Phe2192–Glu2512. The G-loop stretch occupies residues Val2198–Lys2204. The tract at residues Gly2368–Asn2376 is catalytic loop. The segment at His2387–Thr2411 is activation loop. The 33-residue stretch at His2499 to Leu2531 folds into the FATC domain.

Belongs to the PI3/PI4-kinase family. ATM subfamily. Requires Mn(2+) as cofactor.

It localises to the nucleus. It catalyses the reaction L-seryl-[protein] + ATP = O-phospho-L-seryl-[protein] + ADP + H(+). It carries out the reaction L-threonyl-[protein] + ATP = O-phospho-L-threonyl-[protein] + ADP + H(+). Its function is as follows. Serine/threonine protein kinase which activates checkpoint signaling upon genotoxic stresses such as ionizing radiation (IR), ultraviolet light (UV), or DNA replication stalling, thereby acting as a DNA damage sensor. Recognizes the substrate consensus sequence [ST]-Q. Phosphorylates various proteins, which collectively inhibits DNA replication and mitosis and promotes DNA repair and recombination. Prevents mitotic catastrophe by functioning in the S-phase checkpoint and cooperating with atm-1 in the checkpoint response to double-strand breaks (DSBs) after ionizing radiation (IR) to induce cell cycle arrest or apoptosis via the cep-1/p53 pathway. In response to ionizing radiation, probably required for the association between the brc-1-brd-1 heterodimer and rad-51 and let-70 in order to activate E3-ubiquitin ligase activity of the heterodimer and induce ubiquitination at DNA damage sites. This chain is Serine/threonine-protein kinase ATR, found in Caenorhabditis elegans.